We begin with the raw amino-acid sequence, 400 residues long: NADH-quinone oxidoreductase subunit D (400 aa).

It belongs to the complex I 49 kDa subunit family. As to quaternary structure, NDH-1 is composed of 14 different subunits. Subunits NuoB, C, D, E, F, and G constitute the peripheral sector of the complex.

It is found in the cell inner membrane. It carries out the reaction a quinone + NADH + 5 H(+)(in) = a quinol + NAD(+) + 4 H(+)(out). NDH-1 shuttles electrons from NADH, via FMN and iron-sulfur (Fe-S) centers, to quinones in the respiratory chain. The immediate electron acceptor for the enzyme in this species is believed to be ubiquinone. Couples the redox reaction to proton translocation (for every two electrons transferred, four hydrogen ions are translocated across the cytoplasmic membrane), and thus conserves the redox energy in a proton gradient. The chain is NADH-quinone oxidoreductase subunit D from Granulibacter bethesdensis (strain ATCC BAA-1260 / CGDNIH1).